The chain runs to 115 residues: Non-specific lipid-transfer protein Cw18 (115 aa).

An N-terminal signal peptide occupies residues 1–25; the sequence is MARTAATKLALVALVAAMLLVAADA. Intrachain disulfides connect cysteine 29–cysteine 77, cysteine 39–cysteine 54, cysteine 55–cysteine 97, and cysteine 75–cysteine 111.

It belongs to the plant LTP family. As to expression, highly expressed in leaves and coleoptiles. No expression in roots.

Functionally, plant non-specific lipid-transfer proteins transfer phospholipids as well as galactolipids across membranes. May play a role in wax or cutin deposition in the cell walls of expanding epidermal cells and certain secretory tissues. The protein is Non-specific lipid-transfer protein Cw18 (CW18) of Hordeum vulgare (Barley).